The chain runs to 462 residues: Exodeoxyribonuclease 7 large subunit (462 aa).

Belongs to the XseA family. Heterooligomer composed of large and small subunits.

The protein localises to the cytoplasm. It catalyses the reaction Exonucleolytic cleavage in either 5'- to 3'- or 3'- to 5'-direction to yield nucleoside 5'-phosphates.. Its function is as follows. Bidirectionally degrades single-stranded DNA into large acid-insoluble oligonucleotides, which are then degraded further into small acid-soluble oligonucleotides. The sequence is that of Exodeoxyribonuclease 7 large subunit from Pectobacterium atrosepticum (strain SCRI 1043 / ATCC BAA-672) (Erwinia carotovora subsp. atroseptica).